The sequence spans 113 residues: MKKFVSLKKNSDFRNVYRFGVSAANRYLVLYKFPNKGLGRRFGFSISKKVGKAVCRNRLRRILKELCRFHLDRFSDDCDFVFIVRQTSSDQDFHQMEKHMWHVWGKLNKQEKN.

This sequence belongs to the RnpA family. As to quaternary structure, consists of a catalytic RNA component (M1 or rnpB) and a protein subunit.

The catalysed reaction is Endonucleolytic cleavage of RNA, removing 5'-extranucleotides from tRNA precursor.. RNaseP catalyzes the removal of the 5'-leader sequence from pre-tRNA to produce the mature 5'-terminus. It can also cleave other RNA substrates such as 4.5S RNA. The protein component plays an auxiliary but essential role in vivo by binding to the 5'-leader sequence and broadening the substrate specificity of the ribozyme. This chain is Ribonuclease P protein component, found in Desulforamulus reducens (strain ATCC BAA-1160 / DSM 100696 / MI-1) (Desulfotomaculum reducens).